Reading from the N-terminus, the 461-residue chain is V-type ATP synthase beta chain (461 aa).

This sequence belongs to the ATPase alpha/beta chains family.

In terms of biological role, produces ATP from ADP in the presence of a proton gradient across the membrane. The V-type beta chain is a regulatory subunit. The chain is V-type ATP synthase beta chain from Clostridium botulinum (strain ATCC 19397 / Type A).